The following is a 137-amino-acid chain: Small ribosomal subunit protein bS6 (137 aa).

The disordered stretch occupies residues 113–137 (EEQREKKNFRKPFIKREEAATKENK). The segment covering 126–137 (IKREEAATKENK) has biased composition (basic and acidic residues).

It belongs to the bacterial ribosomal protein bS6 family.

Binds together with bS18 to 16S ribosomal RNA. This is Small ribosomal subunit protein bS6 from Mycoplasma capricolum subsp. capricolum (strain California kid / ATCC 27343 / NCTC 10154).